A 1080-amino-acid polypeptide reads, in one-letter code: Putative bifunctional amine oxidase DDB_G0291301 (1080 aa).

The segment at 1–450 (MREFLKDDYD…TIAKSTVPTN (450 aa)) is putative sarcosine oxidase. 10–40 (DVIVCGGGPVGLATAYRCAKAGKKVLCLEKS) is a binding site for FAD. Residues 445–464 (STVPTNQSSNPDGASSTAPT) form a disordered region. The interval 450–1080 (NQSSNPDGAS…NTAASIGGLK (631 aa)) is putative L-amino-acid oxidase. A helical transmembrane segment spans residues 508-528 (VGIIGAGMAGLYAAMILQDLG). FAD contacts are provided by residues Glu535, Arg544, and 563-564 (GA). Substrate is bound at residue Tyr886. Residues Glu978 and 987 to 990 (VIGS) contribute to the FAD site.

This sequence in the N-terminal section; belongs to the MSOX/MTOX family. In the C-terminal section; belongs to the flavin monoamine oxidase family. The cofactor is FAD.

The protein localises to the membrane. The catalysed reaction is sarcosine + O2 + H2O = formaldehyde + glycine + H2O2. It carries out the reaction L-pipecolate + O2 = L-1-piperideine-6-carboxylate + H2O2 + H(+). The enzyme catalyses an L-alpha-amino acid + O2 + H2O = a 2-oxocarboxylate + H2O2 + NH4(+). Catalyzes an oxidative deamination of predominantly hydrophobic and aromatic L-amino acids. Metabolizes sarcosine, L-pipecolic acid and L-proline. The chain is Putative bifunctional amine oxidase DDB_G0291301 from Dictyostelium discoideum (Social amoeba).